The sequence spans 477 residues: Trigger factor (477 aa).

A PPIase FKBP-type domain is found at 174-261 (GDIAVVSFKG…LKDLKEKELP (88 aa)). Positions 435 to 477 (VNEKTTKTSKATKTSKTTKATKTATKTTKTTKTTKTQNKKEKK) are disordered. Over residues 442–470 (TSKATKTSKTTKATKTATKTTKTTKTTKT) the composition is skewed to low complexity.

Belongs to the FKBP-type PPIase family. Tig subfamily.

The protein localises to the cytoplasm. It catalyses the reaction [protein]-peptidylproline (omega=180) = [protein]-peptidylproline (omega=0). Functionally, involved in protein export. Acts as a chaperone by maintaining the newly synthesized protein in an open conformation. Functions as a peptidyl-prolyl cis-trans isomerase. The polypeptide is Trigger factor (Prochlorococcus marinus (strain MIT 9301)).